The sequence spans 420 residues: Putative epoxide hydrolase (420 aa).

This sequence belongs to the peptidase S33 family.

The protein operates within mycotoxin biosynthesis. Putative epoxide hydrolase; part of the fragmented gene cluster that mediates the biosynthesis of dothistromin (DOTH), a polyketide toxin very similar in structure to the aflatoxin precursor, versicolorin B. The first step of the pathway is the conversion of acetate to norsolorinic acid (NOR) and requires the fatty acid synthase subunits hexA and hexB, as well as the polyketide synthase pksA. PksA combines a hexanoyl starter unit and 7 malonyl-CoA extender units to synthesize the precursor NOR. The hexanoyl starter unit is provided to the acyl-carrier protein (ACP) domain by the fungal fatty acid synthase hexA/hexB. The second step is the conversion of NOR to averantin (AVN) and requires the norsolorinic acid ketoreductase nor1, which catalyzes the dehydration of norsolorinic acid to form (1'S)-averantin. The cytochrome P450 monooxygenase avnA then catalyzes the hydroxylation of AVN to 5'hydroxyaverantin (HAVN). The next step is performed by adhA that transforms HAVN to averufin (AVF). Averufin might then be converted to hydroxyversicolorone by cypX and avfA. Hydroxyversicolorone is further converted versiconal hemiacetal acetate (VHA) by moxY. VHA is then the substrate for the versiconal hemiacetal acetate esterase est1 to yield versiconal (VAL). Versicolorin B synthase vbsA then converts VAL to versicolorin B (VERB) by closing the bisfuran ring. Then, the activity of the versicolorin B desaturase verB leads to versicolorin A (VERA). DotB, a predicted chloroperoxidase, may perform epoxidation of the A-ring of VERA. Alternatively, a cytochrome P450, such as cypX or avnA could catalyze this step. It is also possible that another, uncharacterized, cytochrome P450 enzyme is responsible for this step. Opening of the epoxide could potentially be achieved by the epoxide hydrolase epoA. However, epoA seems not to be required for DOTH biosynthesis, but other epoxide hydrolases may have the ability to complement this hydrolysis. Alternatively, opening of the epoxide ring could be achieved non-enzymatically. The next step is the deoxygenation of ring A to yield the 5,8-dihydroxyanthraquinone which is most likely catalyzed by the NADPH dehydrogenase encoded by ver1. The last stages of DOTH biosynthesis are proposed to involve hydroxylation of the bisfuran. OrdB and norB might have oxidative roles here. An alternative possibility is that cytochrome P450 monoogenases such as avnA and cypX might perform these steps in addition to previously proposed steps. This Dothistroma septosporum (Red band needle blight fungus) protein is Putative epoxide hydrolase.